Here is a 384-residue protein sequence, read N- to C-terminus: Large ribosomal subunit protein uL3m (384 aa).

Disordered stretches follow at residues 80 to 101 (NQVTQGLPAPTSGPAAALKRRE) and 237 to 262 (QEASHGNSLNHRTIGSVGGSQGSGSR). Positions 240–249 (SHGNSLNHRT) are enriched in polar residues.

It belongs to the universal ribosomal protein uL3 family. As to quaternary structure, component of the mitochondrial large ribosomal subunit (mt-LSU). Mature N.crassa 74S mitochondrial ribosomes consist of a small (37S) and a large (54S) subunit. The 37S small subunit contains a 16S ribosomal RNA (16S mt-rRNA) and 32 different proteins. The 54S large subunit contains a 23S rRNA (23S mt-rRNA) and 42 different proteins.

The protein resides in the mitochondrion. In terms of biological role, component of the mitochondrial ribosome (mitoribosome), a dedicated translation machinery responsible for the synthesis of mitochondrial genome-encoded proteins, including at least some of the essential transmembrane subunits of the mitochondrial respiratory chain. The mitoribosomes are attached to the mitochondrial inner membrane and translation products are cotranslationally integrated into the membrane. The protein is Large ribosomal subunit protein uL3m (mrpl9) of Neurospora crassa (strain ATCC 24698 / 74-OR23-1A / CBS 708.71 / DSM 1257 / FGSC 987).